We begin with the raw amino-acid sequence, 613 residues long: Probable potassium transport system protein Kup (613 aa).

11 consecutive transmembrane segments (helical) span residues V38–L58, W91–T111, P128–F148, F159–I179, F206–M226, W238–L258, A270–I290, I328–F348, A357–A377, G387–V407, and L410–T430.

It belongs to the HAK/KUP transporter (TC 2.A.72) family.

The protein resides in the cell inner membrane. The enzyme catalyses K(+)(in) + H(+)(in) = K(+)(out) + H(+)(out). Functionally, transport of potassium into the cell. Likely operates as a K(+):H(+) symporter. This chain is Probable potassium transport system protein Kup, found in Chlorobaculum tepidum (strain ATCC 49652 / DSM 12025 / NBRC 103806 / TLS) (Chlorobium tepidum).